The sequence spans 269 residues: Calretinin (269 aa).

EF-hand domains lie at 14-49 (LSAS…LESA), 61-96 (SLGD…EENF), 105-140 (GSSS…LLKK), 149-184 (KLQE…QENF), 193-228 (LSSE…LYEK), and 230-265 (KKEM…VLCS). D27, D29, N31, Y33, E38, D74, N76, D78, K80, E85, D118, D120, S122, Y124, E129, D162, N164, D166, K168, E173, D206, D208, S210, and E217 together coordinate Ca(2+).

It belongs to the calbindin family.

It localises to the synapse. The protein localises to the cell projection. It is found in the dendrite. Calcium-binding protein involved in calcium homeostasis and signal transduction. It plays a critical role in buffering intracellular calcium levels and modulating calcium-dependent signaling pathways. Predominantly expressed in specific neuronal populations, influences synaptic plasticity and neuronal excitability, contributing to learning and memory. During embryonic development, it facilitates neuronal differentiation and maturation. This Gallus gallus (Chicken) protein is Calretinin (CALB2).